A 377-amino-acid chain; its full sequence is NADH dehydrogenase [ubiquinone] 1 alpha subcomplex subunit 9, mitochondrial (377 aa).

A mitochondrion-targeting transit peptide spans 1–35 (MAAAVRFRVVRALPMSRPAITAAATSVFCGSSHRQ). N6-succinyllysine is present on Lys-175. N6-acetyllysine is present on residues Lys-189 and Lys-370.

This sequence belongs to the complex I NDUFA9 subunit family. As to quaternary structure, complex I is composed of 45 different subunits. This a component of the hydrophobic protein fraction. Interacts with BLOC1S1. Interacts with SLC2A4. Interacts with CLOCK. Interacts with RAB5IF. The cofactor is FAD. In terms of processing, acetylated on lysine residues. BLOC1S1 is required for acetylation. Acetylated by CLOCK in a circadian manner.

Its subcellular location is the mitochondrion matrix. Its function is as follows. Accessory subunit of the mitochondrial membrane respiratory chain NADH dehydrogenase (Complex I), that is believed not to be involved in catalysis. Complex I functions in the transfer of electrons from NADH to the respiratory chain. The immediate electron acceptor for the enzyme is believed to be ubiquinone. The chain is NADH dehydrogenase [ubiquinone] 1 alpha subcomplex subunit 9, mitochondrial (Ndufa9) from Mus musculus (Mouse).